The following is a 70-amino-acid chain: uncharacterized protein (70 aa).

The signal sequence occupies residues 1–16; sequence MKLLLVLITLIIAALA.

This is an uncharacterized protein from Orgyia pseudotsugata (Douglas-fir tussock moth).